The following is a 284-amino-acid chain: Phosphonates import ATP-binding protein PhnC 2 (284 aa).

An ABC transporter domain is found at 5 to 253; the sequence is IEVRGLSKSF…MLRDLYGTEA (249 aa). 38–45 is an ATP binding site; it reads GASGSGKS.

It belongs to the ABC transporter superfamily. Phosphonates importer (TC 3.A.1.9.1) family. The complex is composed of two ATP-binding proteins (PhnC), two transmembrane proteins (PhnE) and a solute-binding protein (PhnD).

It is found in the cell inner membrane. The enzyme catalyses phosphonate(out) + ATP + H2O = phosphonate(in) + ADP + phosphate + H(+). Functionally, part of the ABC transporter complex PhnCDE involved in phosphonates import. Responsible for energy coupling to the transport system. This Cupriavidus necator (strain ATCC 17699 / DSM 428 / KCTC 22496 / NCIMB 10442 / H16 / Stanier 337) (Ralstonia eutropha) protein is Phosphonates import ATP-binding protein PhnC 2.